A 333-amino-acid chain; its full sequence is Taste receptor type 2 member 123 (333 aa).

The Extracellular portion of the chain corresponds to 1-14 (MFSQKTNYSHLFTF). A helical transmembrane segment spans residues 15–37 (SIIFYVEIVTGILGNGFIALVNI). Residues 38-57 (MDWLKRRRISTADQILTALA) lie on the Cytoplasmic side of the membrane. Residues 58 to 77 (LTRLIYVWSVLICILLLFLC) traverse the membrane as a helical segment. The Extracellular segment spans residues 78-91 (PHLSMRPEMFTAIG). A helical membrane pass occupies residues 92-114 (VIWVVDNHFSIWLATCLGVFYFL). The Cytoplasmic portion of the chain corresponds to 115-133 (KIASFSNSLFLYLKWRVKK). Residues 134–156 (VVLMIILISLIFLMLNISSLGMY) traverse the membrane as a helical segment. Over 157–204 (DHFSIDVYEGNMSYNLVDSTHFPRIFLFTNSSKVFLIANSSHVFLPIN) the chain is Extracellular. 3 N-linked (GlcNAc...) asparagine glycosylation sites follow: Asn167, Asn186, and Asn195. A helical transmembrane segment spans residues 205–227 (SLFMLIPFTVSLVAFFVLFLSLW). Over 228 to 250 (KHHKKMQVNAKGPRDASTMAHTK) the chain is Cytoplasmic. A helical membrane pass occupies residues 251–273 (ALQIGFSFLLLYAIYLLFIITGI). Residues 274–282 (LNLDLMRCI) are Extracellular-facing. Residues 283-305 (VILLFDHISGAVFSISHSFVLIL) form a helical membrane-spanning segment. The Cytoplasmic segment spans residues 306-333 (GNSKLRQATLSVLPCLRCRSKDMDTVVF).

Belongs to the G-protein coupled receptor T2R family. As to expression, expressed in subsets of taste receptor cells of the tongue and palate epithelium and exclusively in gustducin-positive cells. Expressed in the antrum and fundus (part of the stomach), duodenum and in gastric endocrine cells.

The protein localises to the membrane. Functionally, gustducin-coupled receptor implicated in the perception of bitter compounds in the oral cavity and the gastrointestinal tract. Signals through PLCB2 and the calcium-regulated cation channel TRPM5. The polypeptide is Taste receptor type 2 member 123 (Tas2r123) (Rattus norvegicus (Rat)).